A 287-amino-acid chain; its full sequence is Nucleotide-binding protein Dtpsy_0831 (287 aa).

10–17 is a binding site for ATP; sequence GMSGSGKS. 59–62 contacts GTP; that stretch reads DVRS.

It belongs to the RapZ-like family.

Displays ATPase and GTPase activities. The chain is Nucleotide-binding protein Dtpsy_0831 from Acidovorax ebreus (strain TPSY) (Diaphorobacter sp. (strain TPSY)).